We begin with the raw amino-acid sequence, 396 residues long: Elongation factor Tu (396 aa).

One can recognise a tr-type G domain in the interval 10–205 (KSHANIGTIG…AVDEYIPTPE (196 aa)). The tract at residues 19–26 (GHVDHGKT) is G1. 19–26 (GHVDHGKT) provides a ligand contact to GTP. T26 is a Mg(2+) binding site. The interval 61–65 (GITIS) is G2. The interval 82–85 (DCPG) is G3. GTP is bound by residues 82 to 86 (DCPGH) and 137 to 140 (NKCD). Positions 137–140 (NKCD) are G4. Residues 175 to 177 (SAL) form a G5 region.

Belongs to the TRAFAC class translation factor GTPase superfamily. Classic translation factor GTPase family. EF-Tu/EF-1A subfamily. In terms of assembly, monomer.

The protein localises to the cytoplasm. It catalyses the reaction GTP + H2O = GDP + phosphate + H(+). Its function is as follows. GTP hydrolase that promotes the GTP-dependent binding of aminoacyl-tRNA to the A-site of ribosomes during protein biosynthesis. In Bacillus velezensis (strain DSM 23117 / BGSC 10A6 / LMG 26770 / FZB42) (Bacillus amyloliquefaciens subsp. plantarum), this protein is Elongation factor Tu.